A 203-amino-acid polypeptide reads, in one-letter code: Recombination protein RecR (203 aa).

The C4-type zinc-finger motif lies at 57-73 (CQSCGTLKSNSLGCNNC). The region spanning 81–175 (NKICVVEDIA…KVTKLAQGLP (95 aa)) is the Toprim domain.

Belongs to the RecR family.

In terms of biological role, may play a role in DNA repair. It seems to be involved in an RecBC-independent recombinational process of DNA repair. It may act with RecF and RecO. In Pelagibacter ubique (strain HTCC1062), this protein is Recombination protein RecR.